The primary structure comprises 343 residues: Protein RecA (343 aa).

Glycine 68–threonine 75 is a binding site for ATP.

It belongs to the RecA family.

The protein localises to the cytoplasm. In terms of biological role, can catalyze the hydrolysis of ATP in the presence of single-stranded DNA, the ATP-dependent uptake of single-stranded DNA by duplex DNA, and the ATP-dependent hybridization of homologous single-stranded DNAs. It interacts with LexA causing its activation and leading to its autocatalytic cleavage. The polypeptide is Protein RecA (Syntrophus aciditrophicus (strain SB)).